Consider the following 229-residue polypeptide: Enolase-phosphatase E1 (229 aa).

A compositionally biased stretch (polar residues) spans D208–S218. The interval D208–T229 is disordered. Positions D220–T229 are enriched in basic and acidic residues.

The protein belongs to the HAD-like hydrolase superfamily. MasA/MtnC family. In terms of assembly, monomer. The cofactor is Mg(2+).

It catalyses the reaction 5-methylsulfanyl-2,3-dioxopentyl phosphate + H2O = 1,2-dihydroxy-5-(methylsulfanyl)pent-1-en-3-one + phosphate. It participates in amino-acid biosynthesis; L-methionine biosynthesis via salvage pathway; L-methionine from S-methyl-5-thio-alpha-D-ribose 1-phosphate: step 3/6. It functions in the pathway amino-acid biosynthesis; L-methionine biosynthesis via salvage pathway; L-methionine from S-methyl-5-thio-alpha-D-ribose 1-phosphate: step 4/6. Functionally, bifunctional enzyme that catalyzes the enolization of 2,3-diketo-5-methylthiopentyl-1-phosphate (DK-MTP-1-P) into the intermediate 2-hydroxy-3-keto-5-methylthiopentenyl-1-phosphate (HK-MTPenyl-1-P), which is then dephosphorylated to form the acireductone 1,2-dihydroxy-3-keto-5-methylthiopentene (DHK-MTPene). This is Enolase-phosphatase E1 from Cronobacter sakazakii (Enterobacter sakazakii).